We begin with the raw amino-acid sequence, 1085 residues long: Carbamoyl phosphate synthase large chain (1085 aa).

Positions 1–399 are carboxyphosphate synthetic domain; that stretch reads MPKRTDISNI…ALQKALCSLE (399 aa). ATP is bound by residues Arg-127, Arg-167, Gly-174, Glu-206, Leu-208, Glu-213, Gly-239, Val-240, His-241, Gln-283, and Glu-297. The ATP-grasp 1 domain occupies 131-326; it reads KEAMLKIGMD…IAKVATMLAV (196 aa). Mg(2+)-binding residues include Gln-283, Glu-297, and Asn-299. Mn(2+) is bound by residues Gln-283, Glu-297, and Asn-299. Positions 400-552 are oligomerization domain; that stretch reads NNWLGFESLS…APNPLPPIEN (153 aa). Residues 553–951 form a carbamoyl phosphate synthetic domain region; sequence KQEKKEKKIL…AFFKAQTACF (399 aa). Positions 678 to 871 constitute an ATP-grasp 2 domain; it reads SLFLKELDIK…LAKVATRVMV (194 aa). ATP contacts are provided by Arg-714, Lys-756, Leu-758, Glu-763, Gly-788, Ile-789, His-790, Ser-791, Gln-830, and Glu-842. The Mg(2+) site is built by Gln-830, Glu-842, and Asn-844. Gln-830, Glu-842, and Asn-844 together coordinate Mn(2+). Residues 952–1085 enclose the MGS-like domain; sequence NPIKNKGLIF…ELLALQDYLK (134 aa). An allosteric domain region spans residues 952–1085; that stretch reads NPIKNKGLIF…ELLALQDYLK (134 aa).

It belongs to the CarB family. As to quaternary structure, composed of two chains; the small (or glutamine) chain promotes the hydrolysis of glutamine to ammonia, which is used by the large (or ammonia) chain to synthesize carbamoyl phosphate. Tetramer of heterodimers (alpha,beta)4. The cofactor is Mg(2+). Mn(2+) is required as a cofactor.

The catalysed reaction is hydrogencarbonate + L-glutamine + 2 ATP + H2O = carbamoyl phosphate + L-glutamate + 2 ADP + phosphate + 2 H(+). It catalyses the reaction hydrogencarbonate + NH4(+) + 2 ATP = carbamoyl phosphate + 2 ADP + phosphate + 2 H(+). Its pathway is amino-acid biosynthesis; L-arginine biosynthesis; carbamoyl phosphate from bicarbonate: step 1/1. The protein operates within pyrimidine metabolism; UMP biosynthesis via de novo pathway; (S)-dihydroorotate from bicarbonate: step 1/3. Large subunit of the glutamine-dependent carbamoyl phosphate synthetase (CPSase). CPSase catalyzes the formation of carbamoyl phosphate from the ammonia moiety of glutamine, carbonate, and phosphate donated by ATP, constituting the first step of 2 biosynthetic pathways, one leading to arginine and/or urea and the other to pyrimidine nucleotides. The large subunit (synthetase) binds the substrates ammonia (free or transferred from glutamine from the small subunit), hydrogencarbonate and ATP and carries out an ATP-coupled ligase reaction, activating hydrogencarbonate by forming carboxy phosphate which reacts with ammonia to form carbamoyl phosphate. The protein is Carbamoyl phosphate synthase large chain of Helicobacter pylori (strain ATCC 700392 / 26695) (Campylobacter pylori).